The primary structure comprises 367 residues: 2'-5'-oligoadenylate synthase 1A (367 aa).

Positions 14–61 are interaction with dsRNA; that stretch reads DKFIEDYLLPDTTFGADVKSAVNVVCDFLKERCFQGAAHPVRVSKVVK. S64 provides a ligand contact to ATP. Mg(2+) is bound by residues D76, D78, and D149. The tract at residues 201–211 is interaction with dsRNA; sequence QRPTKLKSLIR. ATP-binding residues include R211, K214, and Q231. The S-geranylgeranyl cysteine moiety is linked to residue C364.

This sequence belongs to the 2-5A synthase family. As to quaternary structure, monomer. Homotetramer. Interacts with OAS1D; the interaction inhibits OAS1A catalytic activity. Requires Mg(2+) as cofactor. In terms of processing, C-terminal prenylated. In terms of tissue distribution, expressed in oocytes and granulosa cells of ovary, in intestine, stomach, spleen and uterus (at protein level). Expressed at high levels in the digestive tract and lymphoid organs. Expressed in ovary and spleen.

Its subcellular location is the cytoplasm. The protein localises to the mitochondrion. It is found in the nucleus. The protein resides in the microsome. It localises to the endoplasmic reticulum. It catalyses the reaction 3 ATP = 5'-triphosphoadenylyl-(2'-&gt;5')-adenylyl-(2'-&gt;5')-adenosine + 2 diphosphate. Produced as a latent enzyme which is activated by dsRNA generated during the course of viral infection. The dsRNA activator must be at least 15 nucleotides long, and no modification of the 2'-hydroxyl group is tolerated. ssRNA or dsDNA do not act as activators. Its function is as follows. Interferon-induced, dsRNA-activated antiviral enzyme which plays a critical role in cellular innate antiviral response. In addition, it may also play a role in other cellular processes such as apoptosis, cell growth, differentiation and gene regulation. Synthesizes higher oligomers of 2'-5'-oligoadenylates (2-5A) from ATP which then bind to the inactive monomeric form of ribonuclease L (RNase L) leading to its dimerization and subsequent activation. Activation of RNase L leads to degradation of cellular as well as viral RNA, resulting in the inhibition of protein synthesis, thus terminating viral replication. Can mediate the antiviral effect via the classical RNase L-dependent pathway or an alternative antiviral pathway independent of RNase L. This Mus musculus (Mouse) protein is 2'-5'-oligoadenylate synthase 1A (Oas1a).